The sequence spans 473 residues: Probable glycine dehydrogenase (decarboxylating) subunit 2 (473 aa).

Lys266 carries the post-translational modification N6-(pyridoxal phosphate)lysine.

Belongs to the GcvP family. C-terminal subunit subfamily. The glycine cleavage system is composed of four proteins: P, T, L and H. In this organism, the P 'protein' is a heterodimer of two subunits. Pyridoxal 5'-phosphate serves as cofactor.

It carries out the reaction N(6)-[(R)-lipoyl]-L-lysyl-[glycine-cleavage complex H protein] + glycine + H(+) = N(6)-[(R)-S(8)-aminomethyldihydrolipoyl]-L-lysyl-[glycine-cleavage complex H protein] + CO2. Functionally, the glycine cleavage system catalyzes the degradation of glycine. The P protein binds the alpha-amino group of glycine through its pyridoxal phosphate cofactor; CO(2) is released and the remaining methylamine moiety is then transferred to the lipoamide cofactor of the H protein. In Thermus thermophilus (strain ATCC BAA-163 / DSM 7039 / HB27), this protein is Probable glycine dehydrogenase (decarboxylating) subunit 2.